Consider the following 56-residue polypeptide: UPF0434 protein WIGBR2520 (56 aa).

Belongs to the UPF0434 family.

This is UPF0434 protein WIGBR2520 from Wigglesworthia glossinidia brevipalpis.